The following is a 365-amino-acid chain: Cytochrome P450 71A3 (365 aa).

It belongs to the cytochrome P450 family. Heme serves as cofactor.

In terms of biological role, may have a role in maturation, such as during flavor formation or other metabolite production specific to aging tissues. The sequence is that of Cytochrome P450 71A3 (CYP71A3) from Solanum melongena (Eggplant).